The chain runs to 954 residues: Serine/threonine-protein kinase ste20 (954 aa).

The span at 1–17 (MDGQLSLLSPTSSSSTS) shows a compositional bias: low complexity. 2 disordered regions span residues 1 to 165 (MDGQ…YDPL) and 203 to 316 (AAPA…RKKS). Residues 18-28 (HSRKRLTKKQR) are compositionally biased toward basic residues. Polar residues-rich tracts occupy residues 33-42 (NHRTSSSFNV), 57-75 (SASS…SLAR), and 100-121 (RSHT…TIPT). Composition is skewed to low complexity over residues 127 to 136 (SPASSSQPQT), 143 to 153 (SAVASTTVTSS), and 203 to 214 (AAPAPTSTTTIA). Positions 224 to 234 (VAPPPPPPPPA) are enriched in pro residues. Low complexity-rich tracts occupy residues 245 to 256 (ARSSKPSKSPKS) and 265 to 277 (ASSF…FSSA). In terms of domain architecture, CRIB spans 334–347 (ISAPENPVHVTHVG). Disordered stretches follow at residues 440–562 (PMIS…VQAS) and 587–655 (QAMA…SNAI). Composition is skewed to pro residues over residues 463 to 475 (RAPP…PGPL) and 514 to 527 (MPPP…PYLP). In terms of domain architecture, Protein kinase spans 674–925 (YRGFTKIGQG…AHDLLRHDFM (252 aa)). ATP-binding positions include 680–688 (IGQGASGGV) and K703. Catalysis depends on D793, which acts as the Proton acceptor.

Belongs to the protein kinase superfamily. STE Ser/Thr protein kinase family. STE20 subfamily.

It is found in the cytoplasm. It localises to the nucleus. It catalyses the reaction L-seryl-[protein] + ATP = O-phospho-L-seryl-[protein] + ADP + H(+). The enzyme catalyses L-threonyl-[protein] + ATP = O-phospho-L-threonyl-[protein] + ADP + H(+). In terms of biological role, MAP4K component of the MAPK pathway required for the mating pheromone response and the regulation of cell polarity and cell cycle. Phosphorylates histone H2B to form H2BS10ph. The protein is Serine/threonine-protein kinase ste20 (stk-4) of Neurospora crassa (strain ATCC 24698 / 74-OR23-1A / CBS 708.71 / DSM 1257 / FGSC 987).